Consider the following 86-residue polypeptide: Short neurotoxin homolog NTL1 (86 aa).

A signal peptide spans 1 to 21; sequence MKTLLLSLVVLTIACLDLGYT. 4 cysteine pairs are disulfide-bonded: Cys24/Cys45, Cys38/Cys62, Cys66/Cys78, and Cys79/Cys84.

Expressed by the venom gland.

It is found in the secreted. This Bungarus multicinctus (Many-banded krait) protein is Short neurotoxin homolog NTL1.